Reading from the N-terminus, the 256-residue chain is Ubiquinone/menaquinone biosynthesis C-methyltransferase UbiE (256 aa).

S-adenosyl-L-methionine is bound by residues T79, D100, and D128–A129.

It belongs to the class I-like SAM-binding methyltransferase superfamily. MenG/UbiE family.

The catalysed reaction is a 2-demethylmenaquinol + S-adenosyl-L-methionine = a menaquinol + S-adenosyl-L-homocysteine + H(+). The enzyme catalyses a 2-methoxy-6-(all-trans-polyprenyl)benzene-1,4-diol + S-adenosyl-L-methionine = a 5-methoxy-2-methyl-3-(all-trans-polyprenyl)benzene-1,4-diol + S-adenosyl-L-homocysteine + H(+). The protein operates within quinol/quinone metabolism; menaquinone biosynthesis; menaquinol from 1,4-dihydroxy-2-naphthoate: step 2/2. It participates in cofactor biosynthesis; ubiquinone biosynthesis. Functionally, methyltransferase required for the conversion of demethylmenaquinol (DMKH2) to menaquinol (MKH2) and the conversion of 2-polyprenyl-6-methoxy-1,4-benzoquinol (DDMQH2) to 2-polyprenyl-3-methyl-6-methoxy-1,4-benzoquinol (DMQH2). The sequence is that of Ubiquinone/menaquinone biosynthesis C-methyltransferase UbiE from Pseudomonas savastanoi pv. phaseolicola (strain 1448A / Race 6) (Pseudomonas syringae pv. phaseolicola (strain 1448A / Race 6)).